The chain runs to 164 residues: CASP-like protein 1C1 (164 aa).

Residues 1-15 (MGDVEIPPLVKQIVR) are Cytoplasmic-facing. Residues 16–36 (GLRGLAFLATILATSFMAASH) form a helical membrane-spanning segment. At 37 to 56 (ERAIFPFDYKADYTDLMLFK) the chain is on the extracellular side. Residues 57-77 (AFLGANIAASLYSFFFVCLPP) form a helical membrane-spanning segment. Topologically, residues 78 to 83 (KSLLWR) are cytoplasmic. Residues 84 to 104 (LAIVLDVIMFGLLVAMDSAAI) form a helical membrane-spanning segment. Residues 105–132 (AAAYLHKHGDSQAFWPPICSQVPTYCYR) are Extracellular-facing. Residues 133 to 153 (VILAISIGFGGVFMFLLIIII) form a helical membrane-spanning segment. The Cytoplasmic portion of the chain corresponds to 154–164 (SISVILNPLLV).

Belongs to the Casparian strip membrane proteins (CASP) family. Homodimer and heterodimers.

The protein resides in the cell membrane. This Populus trichocarpa (Western balsam poplar) protein is CASP-like protein 1C1.